A 552-amino-acid chain; its full sequence is uncharacterized protein (552 aa).

Positions 8–200 constitute a DhaL domain; it reads KLFAEMIIQG…LAIVYAGFLK (193 aa).

This is an uncharacterized protein from Staphylococcus saprophyticus subsp. saprophyticus (strain ATCC 15305 / DSM 20229 / NCIMB 8711 / NCTC 7292 / S-41).